The following is a 306-amino-acid chain: uncharacterized protein (306 aa).

The protein belongs to the asfivirus CP312R family.

It is found in the virion. This is an uncharacterized protein from African swine fever virus (isolate Pig/Kenya/KEN-50/1950) (ASFV).